The chain runs to 387 residues: Ferrochelatase (387 aa).

A ferrochelatase region spans residues 1–318; sequence MGRVGVLLLN…VFIDALAQMV (318 aa). Residues His196 and Glu277 each contribute to the Fe cation site. Positions 319–387 are hlip domain; the sequence is MDSLNDPPCT…QGPLHFVGLL (69 aa).

The protein in the N-terminal section; belongs to the ferrochelatase family. It in the C-terminal section; belongs to the Hlip family.

The protein resides in the cytoplasm. It catalyses the reaction heme b + 2 H(+) = protoporphyrin IX + Fe(2+). Its pathway is porphyrin-containing compound metabolism; protoheme biosynthesis; protoheme from protoporphyrin-IX: step 1/1. Its function is as follows. Catalyzes the ferrous insertion into protoporphyrin IX. The Hlip proteins might regulate tetrapyrrole biosynthesis, maybe at the level of aminolevulinic acid synthesis. Deletion of 4 to 5 members of the Hlip family (always including this member) suggests the proteins are involved in regulation of chlorophyll biosynthesis, in stabilization of chlorophyll-binding proteins and/or in reuse of chlorophylls, and may regulate tetrapyrrole biosynthesis. The Hlip proteins probably stabilize PSII assembly intermediates. In Synechocystis sp. (strain ATCC 27184 / PCC 6803 / Kazusa), this protein is Ferrochelatase.